The following is a 969-amino-acid chain: Poly(ADP-ribose) glycohydrolase (969 aa).

Disordered stretches follow at residues 1–149, 161–341, and 368–400; these read MSAG…QQQT, HAEQ…CQAR, and NNAG…GKRD. Residues 1 to 449 are A-domain; sequence MSAGPGWEPC…LPPEKKWLGT (449 aa). Residues 10–16 carry the Nuclear localization signal motif; sequence CTKRPRW. A compositionally biased stretch (polar residues) spans 69–84; the sequence is NATSFVFKQKTITTWM. Residues 77–84 carry the PIP-box (PCNA interacting peptide) motif; sequence QKTITTWM. Basic and acidic residues predominate over residues 87 to 100; it reads KGPKTAESESKENN. Positions 101 to 113 are enriched in polar residues; that stretch reads NTRIDSMMSSVQK. Positions 116-125 are enriched in basic and acidic residues; the sequence is FYPHKVEKLE. 2 stretches are compositionally biased toward polar residues: residues 128–149 and 179–189; these read PQLN…QQQT and QLSNANIGQSP. Position 135 is a phosphoserine (Ser-135). Position 137 is a phosphothreonine (Thr-137). Positions 190 to 205 are enriched in basic and acidic residues; sequence HTDDHSDTDHEEDRDN. Residue Ser-195 is modified to Phosphoserine. Thr-197 is modified (phosphothreonine). Over residues 226–237 the composition is skewed to polar residues; sequence ARSNCKCSGSRQ. Phosphoserine is present on residues Ser-256, Ser-259, Ser-281, Ser-286, Ser-293, Ser-297, and Ser-311. Residues 275–284 are compositionally biased toward polar residues; the sequence is KLTGQESSLG. Positions 311-325 are enriched in acidic residues; the sequence is SEADEETSPVFDEQD. Composition is skewed to polar residues over residues 329–339 and 369–387; these read SQTANKLSSCQ and NAGT…SSLN. N6-acetyllysine is present on Lys-334. Positions 603–788 are catalytic; that stretch reads QPIPLLKQKM…TEQYSEYTGY (186 aa). 719-720 is a binding site for substrate; it reads IE. Residue Asp-730 is part of the active site. The substrate site is built by Asn-733 and Gln-747. Active-site residues include Glu-748 and Glu-749. Substrate contacts are provided by residues Tyr-788 and 862-867; that span reads NWGCGA.

Belongs to the poly(ADP-ribose) glycohydrolase family. In terms of assembly, interacts with PCNA. Interacts with NUDT5.

Its subcellular location is the nucleus. The catalysed reaction is [(1''-&gt;2')-ADP-alpha-D-ribose](n) + H2O = [(1''-&gt;2')-ADP-alpha-D-ribose](n-1) + ADP-D-ribose. Its function is as follows. Poly(ADP-ribose) glycohydrolase that degrades poly(ADP-ribose) by hydrolyzing the ribose-ribose bonds present in poly(ADP-ribose). PARG acts both as an endo- and exoglycosidase, releasing poly(ADP-ribose) of different length as well as ADP-ribose monomers. It is however unable to cleave the ester bond between the terminal ADP-ribose and ADP-ribosylated residues, leaving proteins that are mono-ADP-ribosylated. Poly(ADP-ribose) is synthesized after DNA damage is only present transiently and is rapidly degraded by PARG. Required to prevent detrimental accumulation of poly(ADP-ribose) upon prolonged replicative stress, while it is not required for recovery from transient replicative stress. Responsible for the prevalence of mono-ADP-ribosylated proteins in cells, thanks to its ability to degrade poly(ADP-ribose) without cleaving the terminal protein-ribose bond. Required for retinoid acid-dependent gene transactivation, probably by removing poly(ADP-ribose) from histone demethylase KDM4D, allowing chromatin derepression at RAR-dependent gene promoters. Involved in the synthesis of ATP in the nucleus, together with PARP1, NMNAT1 and NUDT5. Nuclear ATP generation is required for extensive chromatin remodeling events that are energy-consuming. This chain is Poly(ADP-ribose) glycohydrolase, found in Mus musculus (Mouse).